Here is an 810-residue protein sequence, read N- to C-terminus: F-BAR domain only protein 2 (810 aa).

Positions 3-250 constitute an F-BAR domain; it reads MAYFVENFWG…NMANTTVESL (248 aa). Positions 3 to 274 are mediates dimerization and binding to membranes enriched in Pi(4,5)-P2 and induces their tubulation; that stretch reads MAYFVENFWG…PGLIEFEECD (272 aa). Residues 87-156 adopt a coiled-coil conformation; sequence HLDLVRKLQE…CVEQERLKKE (70 aa). Lysine 297 participates in a covalent cross-link: Glycyl lysine isopeptide (Lys-Gly) (interchain with G-Cter in SUMO2). Residues 301-352 are disordered; the sequence is DAESVECPDADSLNIPDVDEEGYSIKPETNQNDTKENHFYSSSDSDSEDEEP. Serine 312 carries the post-translational modification Phosphoserine. Residue threonine 385 is modified to Phosphothreonine. Phosphoserine occurs at positions 387, 394, and 403. The interval 403–537 is disordered; that stretch reads SNEELTKSKP…VSRGPSPVSL (135 aa). The segment covering 433-456 has biased composition (low complexity); the sequence is PSLDSSSSSSLTSSSSARPTTPLS. 7 positions are modified to phosphoserine: serine 488, serine 493, serine 496, serine 508, serine 510, serine 511, and serine 533. Residues 502 to 521 show a composition bias toward low complexity; the sequence is PLARAESSSSISSSASLSAA. The interval 521 to 810 is mediates interaction with DAB2, EPS15, EPS15R and ITSN1; that stretch reads ANTPTVGVSR…FATGRYLADC (290 aa). Residues 542–809 form the MHD domain; it reads TLPVAVALTE…RFATGRYLAD (268 aa).

This sequence belongs to the FCHO family. Homodimer; disulfide-linked. May form homotetramer. Interacts with AP2A1. Interacts with EPS15, EPS15R, ITSN1 and ITSN2; recruit those scaffolding proteins which in turn may interact with the adaptor protein complex AP-2 at the plasma membrane. Interacts with DAB2 (via DPF motifs); mediates LDL receptor/LDLR endocytosis. In terms of processing, ubiquitinated. Mainly undergoes monoubiquitination but also polyubiquitination.

It is found in the membrane. The protein resides in the clathrin-coated pit. Its function is as follows. Functions in an early step of clathrin-mediated endocytosis. Has both a membrane binding/bending activity and the ability to recruit proteins essential to the formation of functional clathrin-coated pits. Has a lipid-binding activity with a preference for membranes enriched in phosphatidylserine and phosphoinositides (Pi(4,5) biphosphate) like the plasma membrane. Its membrane-bending activity might be important for the subsequent action of clathrin and adaptors in the formation of clathrin-coated vesicles. Involved in adaptor protein complex AP-2-dependent endocytosis of the transferrin receptor, it also functions in the AP-2-independent endocytosis of the LDL receptor. The polypeptide is F-BAR domain only protein 2 (FCHO2) (Pongo abelii (Sumatran orangutan)).